A 249-amino-acid chain; its full sequence is Flagellar L-ring protein (249 aa).

An N-terminal signal peptide occupies residues 1 to 25 (MSRLRTSHALRTAAALVAVGCLASG). Cys-26 carries the N-palmitoyl cysteine lipid modification. The S-diacylglycerol cysteine moiety is linked to residue Cys-26.

The protein belongs to the FlgH family. In terms of assembly, the basal body constitutes a major portion of the flagellar organelle and consists of four rings (L,P,S, and M) mounted on a central rod.

It localises to the cell outer membrane. It is found in the bacterial flagellum basal body. Assembles around the rod to form the L-ring and probably protects the motor/basal body from shearing forces during rotation. The polypeptide is Flagellar L-ring protein (Afipia carboxidovorans (strain ATCC 49405 / DSM 1227 / KCTC 32145 / OM5) (Oligotropha carboxidovorans)).